Here is a 695-residue protein sequence, read N- to C-terminus: Pre-mRNA-splicing factor CLF1 (695 aa).

12 HAT repeats span residues 41 to 73 (DVQR…FEIE), 75 to 107 (HDMR…SELK), 109 to 141 (GYIN…VEES), 143 to 174 (AHFD…FEVR), 176 to 207 (ERYE…FEVR), 296 to 328 (TIIL…LLEN), 333 to 365 (LVME…IWIK), 375 to 412 (NDIP…FEIR), 414 to 445 (DNLE…LETK), 447 to 479 (REFD…FEDS), 521 to 553 (QNFD…KKLT), and 591 to 629 (NNKD…FEGQ).

The protein belongs to the crooked-neck family. As to quaternary structure, associated with the spliceosome.

The protein resides in the nucleus. In terms of biological role, involved in pre-mRNA splicing and cell cycle progression. Required for the spliceosome assembly and initiation of the DNA replication. The polypeptide is Pre-mRNA-splicing factor CLF1 (CLF1) (Candida glabrata (strain ATCC 2001 / BCRC 20586 / JCM 3761 / NBRC 0622 / NRRL Y-65 / CBS 138) (Yeast)).